A 172-amino-acid polypeptide reads, in one-letter code: Probable calcium-binding protein CML28 (172 aa).

EF-hand domains lie at 1–36 (MDST…FGIF), 37–72 (IPDD…ILGD), 95–130 (DEDE…LGLK), and 133–168 (RTAD…GGFA). Residues D14, N16, D18, R20, E25, D50, N52, D54, C56, E61, D108, N110, D112, E119, D146, D148, D150, R152, and E157 each contribute to the Ca(2+) site.

Its function is as follows. Potential calcium sensor. In Oryza sativa subsp. japonica (Rice), this protein is Probable calcium-binding protein CML28 (CML28).